The primary structure comprises 410 residues: MGILSDDVVIISQSEKEGDPSVITINCPDKTGLGCDLCRILLFFGLNIVRGDVSTDGKWCYLVFWVIGKPNTRWNLLKMRLVEASPSFSWAFGISRCYLSDSESQPPKLPDLFLLKLACSDRTGLLYDVTEVLYKLEINIEKVKISTTPDGKVMDLFFVTDTRELLGTVKRRNEVYEYLRDAIGDSMISYDIELVGPEITACSTSSSVAETLFSSDVSGEHSSGLHTSSNVSIAVDNSLSSAHTLIHITCQDHKGLLYDIMRTFKDFNIQISYGRFTIKLGKNCEIDLFIVQSDGRKILDSSKLNALITRLRAELQQPLRVVMMNRGPDTELLVTNPVELSGKGRPQVFHDIALALKKIDTCIFSAEIGRHVTGDREWEVYKVLINEEDSLPIPRSKIEEEVWKTLMGWE.

ACT domains lie at 22–105 (VITI…SESQ), 114–197 (LLKL…LVGP), and 245–324 (LIHI…VVMM).

Its function is as follows. May bind amino acids. The protein is ACT domain-containing protein ACR10 of Arabidopsis thaliana (Mouse-ear cress).